Here is a 549-residue protein sequence, read N- to C-terminus: MTPDELSVALTACLKAAVEAGELVVPTEAVPAEVRVERPKNRDHGDWATNIALQLAKPAGLNPRAVAEILKSRLEAIEGVAAVDIAGPGFLNITLDAAAAGALAKNIVHAGSQYGENQALTGQVINVEFVSANPTGPLHLAHTRWAAVGDSVARLLKASGATVTSEYYINDAGSQMNNFGASVLAAIKGEPTPEGGYPGAYITELAQQVVRDHPYVTELTDEAALPVVRAAAYLAQLADIKETLNDFGVHFDVFFSEQELHSTGAVEKAVDRLRGQGHVFYQDGAIWLRTTDFTDDKDRVLIRANGEPTYFAADAAYYLSKKDRGFVEKIYLLGADHHGYIGRLKAIAACAGDDPARNIEVLIGQMVSVNGARLSKRAGNIVELRDLLNWLGADALRYSLGRSPADSPLALEPEQLQKASNDNPVFYVQYAHARTKAVDRNAEAAGVDRSAFEASLLTHPTESNLLAQLGAFPSVVAEAAKFREPHRVARHLEVVAGTYHRWYDACRVTPFAGEEITDLNRTRLWLNDATGQVLANGLDLLGVSAPERM.

The 'HIGH' region motif lies at 132–142 (ANPTGPLHLAH).

Belongs to the class-I aminoacyl-tRNA synthetase family. In terms of assembly, monomer.

It localises to the cytoplasm. It catalyses the reaction tRNA(Arg) + L-arginine + ATP = L-arginyl-tRNA(Arg) + AMP + diphosphate. The protein is Arginine--tRNA ligase of Renibacterium salmoninarum (strain ATCC 33209 / DSM 20767 / JCM 11484 / NBRC 15589 / NCIMB 2235).